We begin with the raw amino-acid sequence, 92 residues long: Acylphosphatase (92 aa).

An intrachain disulfide couples Cys5 to Cys49. The Acylphosphatase-like domain occupies 5 to 92; sequence CIIAWVYGRV…SGELTDFRIR (88 aa). Residues Arg20 and Asn38 contribute to the active site.

The protein belongs to the acylphosphatase family.

The enzyme catalyses an acyl phosphate + H2O = a carboxylate + phosphate + H(+). In Escherichia coli O157:H7, this protein is Acylphosphatase.